Consider the following 261-residue polypeptide: Small ribosomal subunit protein uS2 (261 aa).

Belongs to the universal ribosomal protein uS2 family.

This chain is Small ribosomal subunit protein uS2, found in Enterococcus faecalis (strain ATCC 700802 / V583).